A 196-amino-acid polypeptide reads, in one-letter code: Elongation factor Ts (196 aa).

The segment at 80 to 83 (TDFV) is involved in Mg(2+) ion dislocation from EF-Tu.

Belongs to the EF-Ts family.

It is found in the cytoplasm. Functionally, associates with the EF-Tu.GDP complex and induces the exchange of GDP to GTP. It remains bound to the aminoacyl-tRNA.EF-Tu.GTP complex up to the GTP hydrolysis stage on the ribosome. This Desulfotalea psychrophila (strain LSv54 / DSM 12343) protein is Elongation factor Ts.